A 118-amino-acid chain; its full sequence is Succinate dehydrogenase assembly factor 1, mitochondrial (118 aa).

Residues 14–16 carry the LYR motif 1; required for interaction with HSC20 motif; it reads LYR. The LYR motif 2; not required for interaction with HSC20 signature appears at 53 to 55; the sequence is LYR. Residues 53–65 are interaction with SDHB; it reads LYRRGRRQLQLLR. The disordered stretch occupies residues 68–118; it reads HATAMGTFVRPRGPAEEPGDATAPGTRLDDGGAPKNSCEDTGARETRSDGR. Residues 94–118 show a composition bias toward basic and acidic residues; it reads RLDDGGAPKNSCEDTGARETRSDGR.

It belongs to the complex I LYR family. SDHAF1 subfamily. Interacts with SDHB within an SDHA-SDHB subcomplex. Also interacts with the iron-sulfur transfer complex formed by HSC20, HSPA9 and ISCU through direct binding to HSC20. Binding of SDHAF1 to SDHB precedes and is necessary for recruitment of the iron-sulfur transfer complex by SDHAF1.

It is found in the mitochondrion matrix. Functionally, plays an essential role in the assembly of succinate dehydrogenase (SDH), an enzyme complex (also referred to as respiratory complex II) that is a component of both the tricarboxylic acid (TCA) cycle and the mitochondrial electron transport chain, and which couples the oxidation of succinate to fumarate with the reduction of ubiquinone (coenzyme Q) to ubiquinol. Promotes maturation of the iron-sulfur protein subunit Sdhb of the SDH catalytic dimer, protecting it from the deleterious effects of oxidants. May act together with SDHAF3. Contributes to iron-sulfur cluster incorporation into SDHB by binding to SDHB and recruiting the iron-sulfur transfer complex formed by HSC20, HSPA9 and ISCU through direct binding to HSC20. The sequence is that of Succinate dehydrogenase assembly factor 1, mitochondrial from Mus musculus (Mouse).